We begin with the raw amino-acid sequence, 182 residues long: PRKR-interacting protein 1 homolog (182 aa).

Basic and acidic residues-rich tracts occupy residues 1–18 (MAVE…KKES), 27–43 (PAEE…RNPD), and 114–124 (IENQKAAEDRT). Disordered regions lie at residues 1-80 (MAVE…GEFH) and 114-182 (IENQ…MGKR). A required for RNA-binding region spans residues 51-143 (KPKEWNPRAP…LKQKKLMAKK (93 aa)). Positions 99 to 157 (LSEKQKLDEEYKEKLIENQKAAEDRTAKRRKKREKLKQKKLMAKKAKMESQKEEDSEKS) form a coiled coil. Positions 125–143 (AKRRKKREKLKQKKLMAKK) are enriched in basic residues. The interval 126–138 (KRRKKREKLKQKK) is required for nuclear localization. A compositionally biased stretch (basic and acidic residues) spans 144 to 156 (AKMESQKEEDSEK). Over residues 164–173 (EGEEKDDDAE) the composition is skewed to acidic residues.

It belongs to the PRKRIP1 family. In terms of assembly, component of the pre-catalytic and post-catalytic spliceosome complexes.

It is found in the nucleus. The protein resides in the nucleolus. In terms of biological role, required for pre-mRNA splicing as component of the spliceosome. Binds double-stranded RNA. This chain is PRKR-interacting protein 1 homolog (prkrip1), found in Danio rerio (Zebrafish).